We begin with the raw amino-acid sequence, 844 residues long: Janus kinase and microtubule-interacting protein 3 (844 aa).

Residues 8–258 (SRAKGDKAEA…QLSQVREADR (251 aa)) are a coiled coil. Residues 250-290 (LSQVREADRHPGSPRRELPHAAGAGDASDHSGSPEQQLDEK) are disordered. Basic and acidic residues predominate over residues 254 to 268 (READRHPGSPRRELP). Residues 269–282 (HAAGAGDASDHSGS) are compositionally biased toward low complexity. A coiled-coil region spans residues 289–421 (EKDARRFQLK…DELSKTLETA (133 aa)). A Phosphoserine modification is found at Ser384. Over residues 466 to 483 (SDGSSVSYQTDRTDQTPC) the composition is skewed to polar residues. Residues 466–489 (SDGSSVSYQTDRTDQTPCTPDDDL) are disordered. Coiled coils occupy residues 493 to 621 (MAKE…RERK) and 683 to 834 (VLTL…FLFL).

The protein belongs to the JAKMIP family. In terms of tissue distribution, specifically expressed in the CNS and endocrine tissues. Also detected in other tissues including heart, testis and prostate.

It is found in the golgi apparatus. This chain is Janus kinase and microtubule-interacting protein 3 (JAKMIP3), found in Homo sapiens (Human).